Consider the following 388-residue polypeptide: GTPase Obg (388 aa).

In terms of domain architecture, Obg spans Met1–Leu159. Residues Ala160–Glu333 form the OBG-type G domain. Residues Gly166–Ser173, Phe191–Ile195, Asp213–Gly216, Asn283–Asp286, and Ser314–Val316 contribute to the GTP site. Mg(2+)-binding residues include Ser173 and Thr193. The disordered stretch occupies residues Asn359–Asp380. The span at Ile364–Asp380 shows a compositional bias: acidic residues.

Belongs to the TRAFAC class OBG-HflX-like GTPase superfamily. OBG GTPase family. As to quaternary structure, monomer. Requires Mg(2+) as cofactor.

It is found in the cytoplasm. In terms of biological role, an essential GTPase which binds GTP, GDP and possibly (p)ppGpp with moderate affinity, with high nucleotide exchange rates and a fairly low GTP hydrolysis rate. Plays a role in control of the cell cycle, stress response, ribosome biogenesis and in those bacteria that undergo differentiation, in morphogenesis control. In Vibrio vulnificus (strain YJ016), this protein is GTPase Obg.